A 632-amino-acid chain; its full sequence is Biosynthetic arginine decarboxylase (632 aa).

Residue K101 is modified to N6-(pyridoxal phosphate)lysine. 281–291 (FDVGGGLGVDY) is a substrate binding site.

It belongs to the Orn/Lys/Arg decarboxylase class-II family. SpeA subfamily. It depends on Mg(2+) as a cofactor. Pyridoxal 5'-phosphate serves as cofactor.

The catalysed reaction is L-arginine + H(+) = agmatine + CO2. Its pathway is amine and polyamine biosynthesis; agmatine biosynthesis; agmatine from L-arginine: step 1/1. Functionally, catalyzes the biosynthesis of agmatine from arginine. This chain is Biosynthetic arginine decarboxylase, found in Klebsiella pneumoniae (strain 342).